We begin with the raw amino-acid sequence, 196 residues long: uncharacterized protein (196 aa).

The disordered stretch occupies residues 44–80; it reads RSVAVPGTEGKKAQNLRQLPAARLTYPTSSSTRPSHA.

This is an uncharacterized protein from Treponema pallidum (strain Nichols).